We begin with the raw amino-acid sequence, 356 residues long: RuBisCO accumulation factor 1 (356 aa).

The segment at 9–192 (LSEEERQELL…RALIEALLLD (184 aa)) is N-terminal alpha-helix. The segment at 216-342 (PRLLPFAGTL…LVLILRPKRV (127 aa)) is C-terminal beta-sheet.

Belongs to the RAF family. As to quaternary structure, homodimer. Forms an RbcL(8)-Raf1(8) complex. Forms complexes of many stoichiometries with RbcL with and without RbcS. RbcX and Raf1 can bind simultaneously to RbcL.

The protein resides in the cytoplasm. A major RuBisCO chaperone. Acts after GroEL-GroES chaperonin to fold and/or assemble the large subunit of RuBisCO (ccbL, rbcL). Cooperates with RbcX in RbcL folding, plays the major role in assembly of dimers into RbcL(8)-Raf1(8) intermediate complexes. RbcS replaces Raf1, leading to holoenzyme formation. In terms of biological role, the Raf1 dimer brackets an RbcL dimer, leading to RbcL(8)-Raf1(8) complex formation. RbcS displaces Raf1, resulting in holoenzyme formation. Probably plays a role in early carboxysome assembly; in its absence CcaA, CcmM, CcmN, RbcL and RbcS colocalize in small patches while the shell proteins CcmK2, CcmK3 and CcmK4 are found diffused in the cytoplasm. Its function is as follows. It has been suggested that Raf1 and RbcX are partially functionally redundant. Other evidence suggests they are antagonistic in mediating RuBisCO assembly. In Synechococcus elongatus (strain ATCC 33912 / PCC 7942 / FACHB-805) (Anacystis nidulans R2), this protein is RuBisCO accumulation factor 1.